A 149-amino-acid chain; its full sequence is MERSLIILKPDAVQRGLIGPILTRIEQRGLRIVGMKLMQIDESLARRHYAIHEGKAFFDSLITYITSGPVVVLVVTGKNIIEIVRSMVGATNPVKAAPGTIRGDFALDIGRNLIHASDSPENGEMEVSLFFRPEELVEMHRSTDQWIYE.

ATP is bound by residues lysine 9, phenylalanine 57, arginine 85, threonine 91, arginine 102, and asparagine 112. The active-site Pros-phosphohistidine intermediate is histidine 115.

This sequence belongs to the NDK family. As to quaternary structure, homotetramer. It depends on Mg(2+) as a cofactor.

The protein resides in the cytoplasm. The catalysed reaction is a 2'-deoxyribonucleoside 5'-diphosphate + ATP = a 2'-deoxyribonucleoside 5'-triphosphate + ADP. It catalyses the reaction a ribonucleoside 5'-diphosphate + ATP = a ribonucleoside 5'-triphosphate + ADP. Its function is as follows. Major role in the synthesis of nucleoside triphosphates other than ATP. The ATP gamma phosphate is transferred to the NDP beta phosphate via a ping-pong mechanism, using a phosphorylated active-site intermediate. This is Nucleoside diphosphate kinase from Roseiflexus sp. (strain RS-1).